Here is a 292-residue protein sequence, read N- to C-terminus: Large ribosomal subunit protein uL18 (292 aa).

Belongs to the universal ribosomal protein uL18 family. In terms of assembly, component of the large ribosomal subunit (LSU).

Its subcellular location is the cytoplasm. The protein resides in the nucleus. Functionally, component of the ribosome, a large ribonucleoprotein complex responsible for the synthesis of proteins in the cell. The small ribosomal subunit (SSU) binds messenger RNAs (mRNAs) and translates the encoded message by selecting cognate aminoacyl-transfer RNA (tRNA) molecules. The large subunit (LSU) contains the ribosomal catalytic site termed the peptidyl transferase center (PTC), which catalyzes the formation of peptide bonds, thereby polymerizing the amino acids delivered by tRNAs into a polypeptide chain. The nascent polypeptides leave the ribosome through a tunnel in the LSU and interact with protein factors that function in enzymatic processing, targeting, and the membrane insertion of nascent chains at the exit of the ribosomal tunnel. The protein is Large ribosomal subunit protein uL18 (rpl5) of Dictyostelium discoideum (Social amoeba).